Here is a 282-residue protein sequence, read N- to C-terminus: Protein-export membrane protein SecF (282 aa).

A run of 6 helical transmembrane segments spans residues 16–36, 126–146, 148–168, 169–189, 221–241, and 253–273; these read MVAL…FNTV, QAIW…FVAF, IFIP…ITAA, FMDV…LMLI, GIIM…VFSL, and VLII…AGLL.

Belongs to the SecD/SecF family. SecF subfamily. Part of the protein translocation apparatus. Forms a complex with SecD.

It is found in the cell membrane. Its function is as follows. Involved in protein export. The protein is Protein-export membrane protein SecF of Methanolacinia petrolearia (strain DSM 11571 / OCM 486 / SEBR 4847) (Methanoplanus petrolearius).